Reading from the N-terminus, the 550-residue chain is uncharacterized protein (550 aa).

The signal sequence occupies residues 1–13; sequence MAGALFEPSFAAA. Residues 312 to 358 are disordered; it reads DAQPDPHLSGDEPPSRPLTPETTLFEALTPDPEPDPPATHAPAELIT.

This sequence to M.tuberculosis Rv3776.

This is an uncharacterized protein from Mycobacterium tuberculosis (strain CDC 1551 / Oshkosh).